Reading from the N-terminus, the 282-residue chain is tRNA (guanine-N(1)-)-methyltransferase (282 aa).

The interval 77 to 114 (TGPAATVSDLESSAEHKRNLRPATTNGDAEPLGEKAGG) is disordered. S-adenosyl-L-methionine-binding positions include Gly149 and 173–178 (IGDYVL).

This sequence belongs to the RNA methyltransferase TrmD family. Homodimer.

The protein resides in the cytoplasm. The enzyme catalyses guanosine(37) in tRNA + S-adenosyl-L-methionine = N(1)-methylguanosine(37) in tRNA + S-adenosyl-L-homocysteine + H(+). Functionally, specifically methylates guanosine-37 in various tRNAs. The polypeptide is tRNA (guanine-N(1)-)-methyltransferase (Corynebacterium jeikeium (strain K411)).